The following is a 107-amino-acid chain: Integration host factor subunit beta (107 aa).

A disordered region spans residues 87–107 (RERVNNGTRKNGGSADAASGG).

The protein belongs to the bacterial histone-like protein family. Heterodimer of an alpha and a beta chain.

Functionally, this protein is one of the two subunits of integration host factor, a specific DNA-binding protein that functions in genetic recombination as well as in transcriptional and translational control. The sequence is that of Integration host factor subunit beta from Granulibacter bethesdensis (strain ATCC BAA-1260 / CGDNIH1).